A 339-amino-acid polypeptide reads, in one-letter code: NADH-quinone oxidoreductase subunit H (339 aa).

The next 9 helical transmembrane spans lie at 10 to 30, 50 to 70, 82 to 102, 115 to 135, 155 to 175, 187 to 207, 235 to 255, 275 to 295, and 311 to 331; these read FPLT…ILCV, PNVV…KLLF, ILFI…WAVI, VGVL…IIAG, ISYE…TGTL, LPWW…ISVL, MGFA…SAMT, IPGF…FLWI, and GWKV…SVLF.

Belongs to the complex I subunit 1 family. NDH-1 is composed of 14 different subunits. Subunits NuoA, H, J, K, L, M, N constitute the membrane sector of the complex.

It localises to the cell inner membrane. It catalyses the reaction a quinone + NADH + 5 H(+)(in) = a quinol + NAD(+) + 4 H(+)(out). NDH-1 shuttles electrons from NADH, via FMN and iron-sulfur (Fe-S) centers, to quinones in the respiratory chain. The immediate electron acceptor for the enzyme in this species is believed to be ubiquinone. Couples the redox reaction to proton translocation (for every two electrons transferred, four hydrogen ions are translocated across the cytoplasmic membrane), and thus conserves the redox energy in a proton gradient. This subunit may bind ubiquinone. In Rickettsia typhi (strain ATCC VR-144 / Wilmington), this protein is NADH-quinone oxidoreductase subunit H.